The following is a 138-amino-acid chain: Putative pre-16S rRNA nuclease (138 aa).

Belongs to the YqgF nuclease family.

It localises to the cytoplasm. Its function is as follows. Could be a nuclease involved in processing of the 5'-end of pre-16S rRNA. The sequence is that of Putative pre-16S rRNA nuclease from Mycoplasma genitalium (strain ATCC 33530 / DSM 19775 / NCTC 10195 / G37) (Mycoplasmoides genitalium).